Here is a 47-residue protein sequence, read N- to C-terminus: Turripeptide Ici9.1 (47 aa).

Disulfide bonds link Cys-1/Cys-31, Cys-5/Cys-24, and Cys-13/Cys-45. The Kazal-like domain occupies Cys-1–Gln-47.

This sequence belongs to the conopeptide P-like superfamily. Expressed by the venom duct.

It localises to the secreted. Acts as a neurotoxin by inhibiting an ion channel. May also act as a serine protease inhibitor, since it possess the kazal serine protease inhibitor signature. This Iotyrris cingulifera (Sea snail) protein is Turripeptide Ici9.1.